The primary structure comprises 216 residues: Enolase-phosphatase E1 (216 aa).

Mg(2+) contacts are provided by Asp8 and Glu10. Substrate is bound by residues Ser115–Ser116 and Lys149. Asp172 contacts Mg(2+).

It belongs to the HAD-like hydrolase superfamily. MasA/MtnC family. Monomer. Mg(2+) serves as cofactor.

The protein localises to the cytoplasm. Its subcellular location is the nucleus. It carries out the reaction 5-methylsulfanyl-2,3-dioxopentyl phosphate + H2O = 1,2-dihydroxy-5-(methylsulfanyl)pent-1-en-3-one + phosphate. It functions in the pathway amino-acid biosynthesis; L-methionine biosynthesis via salvage pathway; L-methionine from S-methyl-5-thio-alpha-D-ribose 1-phosphate: step 3/6. Its pathway is amino-acid biosynthesis; L-methionine biosynthesis via salvage pathway; L-methionine from S-methyl-5-thio-alpha-D-ribose 1-phosphate: step 4/6. Functionally, bifunctional enzyme that catalyzes the enolization of 2,3-diketo-5-methylthiopentyl-1-phosphate (DK-MTP-1-P) into the intermediate 2-hydroxy-3-keto-5-methylthiopentenyl-1-phosphate (HK-MTPenyl-1-P), which is then dephosphorylated to form the acireductone 1,2-dihydroxy-3-keto-5-methylthiopentene (DHK-MTPene). The chain is Enolase-phosphatase E1 (utr4) from Schizosaccharomyces pombe (strain 972 / ATCC 24843) (Fission yeast).